The primary structure comprises 406 residues: Enoyl-[acyl-carrier-protein] reductase [NADH] (406 aa).

NAD(+)-binding positions include G48–F53, F74–E75, D111–A112, and I140–A141. Y226 is a binding site for substrate. Y236 serves as the catalytic Proton donor. Residues K245 and L275 to T277 each bind NAD(+).

The protein belongs to the TER reductase family. Monomer.

The enzyme catalyses a 2,3-saturated acyl-[ACP] + NAD(+) = a (2E)-enoyl-[ACP] + NADH + H(+). The protein operates within lipid metabolism; fatty acid biosynthesis. Involved in the final reduction of the elongation cycle of fatty acid synthesis (FAS II). Catalyzes the reduction of a carbon-carbon double bond in an enoyl moiety that is covalently linked to an acyl carrier protein (ACP). The polypeptide is Enoyl-[acyl-carrier-protein] reductase [NADH] (Coxiella burnetii (strain CbuK_Q154) (Coxiella burnetii (strain Q154))).